The chain runs to 166 residues: C-signal (166 aa).

In terms of processing, the mature C-signal (p17) is derived from the precursor sequence (p25) by proteolytic cleavage. The subtilisin-like protease PopC is directly responsible for cleavage of p25 to p17. The cleavage site is probably located between amino acid residues 60 and 68 in p25.

It localises to the secreted. The protein localises to the cell outer membrane. Its activity is regulated as follows. Synthesized as a precursor protein (p25), which is cleaved after secretion to generate the mature active C-signal (p17). The p25 precursor purified from M.xanthus cells does not display C-signal activity. Its function is as follows. Cell-cell signaling protein required for fruiting body formation, a multicellular developmental program that is induced in response to starvation. Necessary for rippling, cellular aggregation, spore differentiation and for gene expression that is initiated after 6 hours of starvation. In starving cells, the C-signal directly induces aggregation and sporulation, which are induced at distinct threshold levels of C-signaling. Contact with C-signaling induces cells to glide with high speed and low stop and reversal frequencies toward aggregation centers. The C-signal acts as a morphogen and induces distinct events at distinct threshold levels. A regulated increase in the level of C-signaling during development ensures the correct temporal order of aggregation and sporulation. This Myxococcus xanthus protein is C-signal.